The primary structure comprises 482 residues: uncharacterized protein (482 aa).

The 75-residue stretch at 5-79 folds into the DWNN domain; the sequence is IYYKFKSQKD…STSVIVRRVP (75 aa). Positions 86–108 are disordered; it reads GTAARYVSGAPKTTGARSDSVKR. A CCHC-type zinc finger spans residues 183–200; the sequence is YICYRCGQKGHWIQACPT. The segment at 282 to 322 adopts an RING-type; degenerate zinc-finger fold; it reads CTLCKKLARNACRTPCCDKLFCEECIQTALLDSDFECPNCH. Disordered stretches follow at residues 346-393 and 447-482; these read KSVL…SSAV and QVYHNNRNPPRTNSRPSNASVPPPSSLHKNPPTKTN. A compositionally biased stretch (low complexity) spans 451-466; sequence NNRNPPRTNSRPSNAS.

Its subcellular location is the nucleus. This is an uncharacterized protein from Schizosaccharomyces pombe (strain 972 / ATCC 24843) (Fission yeast).